Reading from the N-terminus, the 354-residue chain is CX3C chemokine receptor 1 (354 aa).

At 1-32 (MSTSFPELDLENFEYDDSAEACYLGDIVAFGT) the chain is on the extracellular side. Residues 33–60 (IFLSVFYALVFTFGLVGNLLVVLALTNS) traverse the membrane as a helical segment. Over 61–70 (RKPKSITDIY) the chain is Cytoplasmic. Residues 71 to 91 (LLNLALSDLLFVATLPFWTHY) traverse the membrane as a helical segment. Residues 92-104 (LISHEGLHNAMCK) are Extracellular-facing. A disulfide bridge connects residues C103 and C176. Residues 105-126 (LTTAFFFIGFFGGIFFITVISI) traverse the membrane as a helical segment. The Cytoplasmic segment spans residues 127–143 (DRYLAIVLAANSMNNRT). The helical transmembrane segment at 144-168 (VQHGVTISLGVWAAAILVASPQFMF) threads the bilayer. At 169-196 (TKRKDNECLGDYPEVLQEMWPVLRNSEV) the chain is on the extracellular side. The helical transmembrane segment at 197–216 (NILGFALPLLIMSFCYFRII) threads the bilayer. Residues 217–232 (QTLFSCKNRKKARAVR) are Cytoplasmic-facing. Residues 233–257 (LILLVVFAFFLFWTPYNIMIFLETL) form a helical membrane-spanning segment. The Extracellular segment spans residues 258 to 274 (KFYNFFPSCDMKRDLRL). A helical membrane pass occupies residues 275–298 (ALSVTETVAFSHCCLNPFIYAFAG). The Cytoplasmic portion of the chain corresponds to 299 to 354 (EKFRRYLGHLYRKCLAVLCGHPVHTGFSPESQRSRQDSILSSFTHYTSEGDGSLLL). T345 carries the phosphothreonine modification.

The protein belongs to the G-protein coupled receptor 1 family. As to quaternary structure, found in a ternary complex with CX3CL1 and ITGAV:ITGB3 or ITGA4:ITGB1. This protein is not N-glycosylated which is unusual for G-protein-coupled receptors. Specifically expressed in subsets of leukocytes: expressed in monocytes, subsets of T-cells and natural killer (NK) cells in the circulation, dendritic cells, as well as in microglia in the central nervous system (CNS). Expression level subdivides blood monocytes into two major functional subsets; CD14(+)CD16(-)-CX3CR1(low) inflammatory monocytes and CD14(low)CD16(+)CX3CR1(high) homeostatic monocytes. Expressed in myeloid-derived mucosal dendritic cells, which populate the entire lamina propria of the small intestine.

The protein localises to the cell membrane. Receptor for the C-X3-C chemokine fractalkine (CX3CL1) present on many early leukocyte cells; CX3CR1-CX3CL1 signaling exerts distinct functions in different tissue compartments, such as immune response, inflammation, cell adhesion and chemotaxis. CX3CR1-CX3CL1 signaling mediates cell migratory functions. Responsible for the recruitment of natural killer (NK) cells to inflamed tissues. Acts as a regulator of inflammation process leading to atherogenesis by mediating macrophage and monocyte recruitment to inflamed atherosclerotic plaques, promoting cell survival. Involved in airway inflammation by promoting interleukin 2-producing T helper (Th2) cell survival in inflamed lung. Involved in the migration of circulating monocytes to non-inflamed tissues, where they differentiate into macrophages and dendritic cells. Acts as a negative regulator of angiogenesis, probably by promoting macrophage chemotaxis. Plays a key role in brain microglia by regulating inflammatory response in the central nervous system (CNS) and regulating synapse maturation. Required to restrain the microglial inflammatory response in the CNS and the resulting parenchymal damage in response to pathological stimuli. Involved in brain development by participating in synaptic pruning, a natural process during which brain microglia eliminates extra synapses during postnatal development. Synaptic pruning by microglia is required to promote the maturation of circuit connectivity during brain development. Acts as an important regulator of the gut microbiota by controlling immunity to intestinal bacteria and fungi. Expressed in lamina propria dendritic cells in the small intestine, which form transepithelial dendrites capable of taking up bacteria in order to provide defense against pathogenic bacteria. Required to initiate innate and adaptive immune responses against dissemination of commensal fungi (mycobiota) component of the gut: expressed in mononuclear phagocytes (MNPs) and acts by promoting induction of antifungal IgG antibodies response to confer protection against disseminated C.albicans or C.auris infection. Also acts as a receptor for C-C motif chemokine CCL26, inducing cell chemotaxis. The sequence is that of CX3C chemokine receptor 1 from Mus musculus (Mouse).